We begin with the raw amino-acid sequence, 396 residues long: Small ribosomal subunit protein uS9m (396 aa).

Positions 374–396 (PRVRERKKPGQEGARRKFTWKKR) are disordered.

This sequence belongs to the universal ribosomal protein uS9 family. As to quaternary structure, component of the mitochondrial ribosome small subunit (28S) which comprises a 12S rRNA and about 30 distinct proteins.

The protein resides in the mitochondrion. This Bos taurus (Bovine) protein is Small ribosomal subunit protein uS9m (MRPS9).